Here is a 178-residue protein sequence, read N- to C-terminus: Cysteine-rich venom protein VAR3 (178 aa).

The N-terminal stretch at 1–22 (MILLKLYLTLAAILCQSRGTTS) is a signal peptide. The 129-residue stretch at 41-169 (NKHNDLRRTV…PLKYFLVCQY (129 aa)) folds into the SCP domain. Cystine bridges form between Cys-77-Cys-156, Cys-95-Cys-170, and Cys-151-Cys-167.

It belongs to the CRISP family. Contains 8 disulfide bonds. Expressed by the venom gland.

Its subcellular location is the secreted. Blocks ryanodine receptors, and potassium channels. This chain is Cysteine-rich venom protein VAR3, found in Varanus acanthurus (Ridge-tailed monitor).